Here is a 485-residue protein sequence, read N- to C-terminus: Glutamyl-tRNA(Gln) amidotransferase subunit A (485 aa).

Catalysis depends on charge relay system residues K76 and S151. Residue S175 is the Acyl-ester intermediate of the active site.

Belongs to the amidase family. GatA subfamily. As to quaternary structure, heterotrimer of A, B and C subunits.

The catalysed reaction is L-glutamyl-tRNA(Gln) + L-glutamine + ATP + H2O = L-glutaminyl-tRNA(Gln) + L-glutamate + ADP + phosphate + H(+). Allows the formation of correctly charged Gln-tRNA(Gln) through the transamidation of misacylated Glu-tRNA(Gln) in organisms which lack glutaminyl-tRNA synthetase. The reaction takes place in the presence of glutamine and ATP through an activated gamma-phospho-Glu-tRNA(Gln). The protein is Glutamyl-tRNA(Gln) amidotransferase subunit A of Methylococcus capsulatus (strain ATCC 33009 / NCIMB 11132 / Bath).